The following is a 466-amino-acid chain: Asparagine--tRNA ligase (466 aa).

The protein belongs to the class-II aminoacyl-tRNA synthetase family. In terms of assembly, homodimer.

Its subcellular location is the cytoplasm. The enzyme catalyses tRNA(Asn) + L-asparagine + ATP = L-asparaginyl-tRNA(Asn) + AMP + diphosphate + H(+). This is Asparagine--tRNA ligase from Shewanella sp. (strain MR-7).